Reading from the N-terminus, the 407-residue chain is MATLHFVPQHEEEQVYSISGKALKLTTSDDIKPYLEELAALKTCTKLDLSGNTIGTEASEALAKCIAENTQVRESLVEVNFADLYTSRLVDEVVDSLKFLLPVLLKCPHLEIVNLSDNAFGLRTIELLEDYIAHAVNIKHLILSNNGMGPFAGERIGKALFHLAQNKKAASKPFLETFICGRNRLENGSAVYLALGLKSHSEGLKVVKLYQNGIRPKGVATLIHYGLQYLKNLEILDLQDNTFTKHASLILAKALPTWKDSLFELNLNDCLLKTAGSDEVFKVFTEVKFPNLHVLKFEYNEMAQETIEVSFLPAMEKGNLPELEKLEINGNRLDEDSDALDLLQSKFDDLEVDDFEEVDSEDEEGEDEEDEDEDEKLEEIETERLEKELLEVQVDDLAERLAETEIK.

11 LRR repeats span residues 11-39, 40-67, 68-101, 102-133, 134-166, 167-197, 198-226, 227-256, 257-285, 286-315, and 316-346; these read EEEQ…EELA, ALKT…KCIA, ENTQ…KFLL, PVLL…DYIA, HAVN…LAQN, KKAA…ALGL, KSHS…IHYG, LQYL…KALP, TWKD…KVFT, EVKF…LPAM, and EKGN…LQSK. A disordered region spans residues 353–378; that stretch reads DDFEEVDSEDEEGEDEEDEDEDEKLE. S360 bears the Phosphoserine mark.

Belongs to the RNA1 family.

It is found in the cytoplasm. In terms of biological role, GTPase activator for the nuclear Ras-related regulatory protein GSP1 (Ran), converting it to the putatively inactive GDP-bound state. The protein is Ran GTPase-activating protein 1 (RNA1) of Saccharomyces cerevisiae (strain ATCC 204508 / S288c) (Baker's yeast).